We begin with the raw amino-acid sequence, 157 residues long: Putative tRNA (cytidine(34)-2'-O)-methyltransferase (157 aa).

Positions 79, 104, and 125 each coordinate S-adenosyl-L-methionine.

It belongs to the class IV-like SAM-binding methyltransferase superfamily. RNA methyltransferase TrmH family. TrmL subfamily.

It localises to the cytoplasm. It catalyses the reaction cytidine(34) in tRNA + S-adenosyl-L-methionine = 2'-O-methylcytidine(34) in tRNA + S-adenosyl-L-homocysteine + H(+). The enzyme catalyses 5-carboxymethylaminomethyluridine(34) in tRNA(Leu) + S-adenosyl-L-methionine = 5-carboxymethylaminomethyl-2'-O-methyluridine(34) in tRNA(Leu) + S-adenosyl-L-homocysteine + H(+). Its function is as follows. Could methylate the ribose at the nucleotide 34 wobble position in tRNA. The protein is Putative tRNA (cytidine(34)-2'-O)-methyltransferase of Geobacillus stearothermophilus (Bacillus stearothermophilus).